The chain runs to 329 residues: 4-hydroxythreonine-4-phosphate dehydrogenase (329 aa).

Positions 136 and 137 each coordinate substrate. A divalent metal cation-binding residues include H166, H211, and H266. Positions 274, 283, and 292 each coordinate substrate.

This sequence belongs to the PdxA family. Homodimer. It depends on Zn(2+) as a cofactor. Mg(2+) is required as a cofactor. Requires Co(2+) as cofactor.

It is found in the cytoplasm. It catalyses the reaction 4-(phosphooxy)-L-threonine + NAD(+) = 3-amino-2-oxopropyl phosphate + CO2 + NADH. It participates in cofactor biosynthesis; pyridoxine 5'-phosphate biosynthesis; pyridoxine 5'-phosphate from D-erythrose 4-phosphate: step 4/5. Functionally, catalyzes the NAD(P)-dependent oxidation of 4-(phosphooxy)-L-threonine (HTP) into 2-amino-3-oxo-4-(phosphooxy)butyric acid which spontaneously decarboxylates to form 3-amino-2-oxopropyl phosphate (AHAP). The protein is 4-hydroxythreonine-4-phosphate dehydrogenase of Neisseria meningitidis serogroup A / serotype 4A (strain DSM 15465 / Z2491).